The sequence spans 82 residues: Penaeidin-3h (82 aa).

A signal peptide spans Met-1 to Gly-19. At Gln-20 the chain carries Pyrrolidone carboxylic acid. Cystine bridges form between Cys-55–Cys-73 and Cys-67–Cys-74. Ser-81 carries the post-translational modification Serine amide.

It belongs to the penaeidin family.

The protein resides in the cytoplasmic granule. Antibacterial and antifungal activity. Presents chitin-binding activity. The sequence is that of Penaeidin-3h from Penaeus vannamei (Whiteleg shrimp).